We begin with the raw amino-acid sequence, 360 residues long: 3-dehydroquinate synthase (360 aa).

Residues 71–76 (DGEAHK), 105–109 (GVVGD), 129–130 (TT), Lys-142, and Lys-151 contribute to the NAD(+) site. Residues Glu-184, His-247, and His-264 each contribute to the Zn(2+) site.

The protein belongs to the sugar phosphate cyclases superfamily. Dehydroquinate synthase family. Co(2+) serves as cofactor. Zn(2+) is required as a cofactor. The cofactor is NAD(+).

The protein resides in the cytoplasm. It carries out the reaction 7-phospho-2-dehydro-3-deoxy-D-arabino-heptonate = 3-dehydroquinate + phosphate. The protein operates within metabolic intermediate biosynthesis; chorismate biosynthesis; chorismate from D-erythrose 4-phosphate and phosphoenolpyruvate: step 2/7. Its function is as follows. Catalyzes the conversion of 3-deoxy-D-arabino-heptulosonate 7-phosphate (DAHP) to dehydroquinate (DHQ). The polypeptide is 3-dehydroquinate synthase (Azoarcus sp. (strain BH72)).